Here is a 409-residue protein sequence, read N- to C-terminus: 4-hydroxy-3-methylbut-2-en-1-yl diphosphate synthase (ferredoxin) (409 aa).

The segment covering 1-12 (MQTLDRPNAPTQ) has biased composition (polar residues). The disordered stretch occupies residues 1–22 (MQTLDRPNAPTQQPYPEPVYPR). Cysteine 314, cysteine 317, cysteine 348, and glutamate 355 together coordinate [4Fe-4S] cluster.

Belongs to the IspG family. [4Fe-4S] cluster serves as cofactor.

It catalyses the reaction (2E)-4-hydroxy-3-methylbut-2-enyl diphosphate + 2 oxidized [2Fe-2S]-[ferredoxin] + H2O = 2-C-methyl-D-erythritol 2,4-cyclic diphosphate + 2 reduced [2Fe-2S]-[ferredoxin] + H(+). Its pathway is isoprenoid biosynthesis; isopentenyl diphosphate biosynthesis via DXP pathway; isopentenyl diphosphate from 1-deoxy-D-xylulose 5-phosphate: step 5/6. Its function is as follows. Converts 2C-methyl-D-erythritol 2,4-cyclodiphosphate (ME-2,4cPP) into 1-hydroxy-2-methyl-2-(E)-butenyl 4-diphosphate. The protein is 4-hydroxy-3-methylbut-2-en-1-yl diphosphate synthase (ferredoxin) of Synechococcus sp. (strain JA-2-3B'a(2-13)) (Cyanobacteria bacterium Yellowstone B-Prime).